Consider the following 305-residue polypeptide: Large ribosomal subunit protein uL3c (305 aa).

Residues 1 to 84 constitute a chloroplast transit peptide; sequence MAAILPTFSI…AVGGLEIKMM (84 aa). The interval 228–256 is disordered; the sequence is SHRALGSIGAGTTPGHVYKGKKMPGRMGG.

Component of the chloroplast large ribosomal subunit (LSU). Mature 70S chloroplast ribosomes of higher plants consist of a small (30S) and a large (50S) subunit. The 30S small subunit contains 1 molecule of ribosomal RNA (16S rRNA) and 24 different proteins. The 50S large subunit contains 3 rRNA molecules (23S, 5S and 4.5S rRNA) and 33 different proteins.

The protein resides in the plastid. Its subcellular location is the chloroplast. Component of the chloroplast ribosome (chloro-ribosome), a dedicated translation machinery responsible for the synthesis of chloroplast genome-encoded proteins, including proteins of the transcription and translation machinery and components of the photosynthetic apparatus. This is Large ribosomal subunit protein uL3c (RPL3) from Spinacia oleracea (Spinach).